Here is a 392-residue protein sequence, read N- to C-terminus: 23S rRNA (uracil(747)-C(5))-methyltransferase RlmC (392 aa).

[4Fe-4S] cluster contacts are provided by Cys-4, Cys-12, Cys-15, and Cys-93. S-adenosyl-L-methionine is bound by residues Gln-218, Phe-247, Glu-275, and Asn-321. Cys-348 acts as the Nucleophile in catalysis.

Belongs to the class I-like SAM-binding methyltransferase superfamily. RNA M5U methyltransferase family. RlmC subfamily.

It carries out the reaction uridine(747) in 23S rRNA + S-adenosyl-L-methionine = 5-methyluridine(747) in 23S rRNA + S-adenosyl-L-homocysteine + H(+). Functionally, catalyzes the formation of 5-methyl-uridine at position 747 (m5U747) in 23S rRNA. This is 23S rRNA (uracil(747)-C(5))-methyltransferase RlmC from Haemophilus influenzae (strain 86-028NP).